Consider the following 58-residue polypeptide: MSYYVCVQLVNDVCHEWAERSDLLSLPEGSGLQIGGMLLLLSATAWGIQQIARLLLNR.

The protein is 6.4 kDa protein of Pseudomonas phage Pf3 (Bacteriophage Pf3).